A 91-amino-acid polypeptide reads, in one-letter code: Large ribosomal subunit protein bL31B (91 aa).

Belongs to the bacterial ribosomal protein bL31 family. Type B subfamily. Part of the 50S ribosomal subunit.

The sequence is that of Large ribosomal subunit protein bL31B from Mycolicibacterium vanbaalenii (strain DSM 7251 / JCM 13017 / BCRC 16820 / KCTC 9966 / NRRL B-24157 / PYR-1) (Mycobacterium vanbaalenii).